The primary structure comprises 280 residues: Bis(5'-nucleosyl)-tetraphosphatase, symmetrical (280 aa).

It belongs to the Ap4A hydrolase family.

It carries out the reaction P(1),P(4)-bis(5'-adenosyl) tetraphosphate + H2O = 2 ADP + 2 H(+). In terms of biological role, hydrolyzes diadenosine 5',5'''-P1,P4-tetraphosphate to yield ADP. The chain is Bis(5'-nucleosyl)-tetraphosphatase, symmetrical from Shigella flexneri serotype 5b (strain 8401).